Consider the following 310-residue polypeptide: Alpha/beta hydrolase domain-containing protein 17A (310 aa).

Catalysis depends on charge relay system residues Ser-190, Asp-255, and His-284. Residue Ser-307 is modified to Phosphoserine.

The protein belongs to the AB hydrolase superfamily. ABHD17 family. Post-translationally, palmitoylated on cysteine residues located in a cysteine cluster at the N-terminus which promotes membrane localization. Palmitoylation is required for post-synaptic localization and for depalmitoylating activity towards DLG4/PSD95.

It localises to the cell membrane. The protein localises to the endosome membrane. Its subcellular location is the cell projection. The protein resides in the dendritic spine. It is found in the postsynaptic density membrane. It carries out the reaction S-hexadecanoyl-L-cysteinyl-[protein] + H2O = L-cysteinyl-[protein] + hexadecanoate + H(+). Its activity is regulated as follows. Inhibited by palmostatin-B. Hydrolyzes fatty acids from S-acylated cysteine residues in proteins. Has depalmitoylating activity towards NRAS. Has depalmitoylating activity towards DLG4/PSD95. May have depalmitoylating activity towards MAP6. The protein is Alpha/beta hydrolase domain-containing protein 17A of Homo sapiens (Human).